A 596-amino-acid polypeptide reads, in one-letter code: Elongation factor 4 (596 aa).

The 183-residue stretch at 2–184 (RNIRNFSIIA…AIVHRIPPPT (183 aa)) folds into the tr-type G domain. Residues 14-19 (DHGKST) and 131-134 (NKID) each bind GTP.

Belongs to the TRAFAC class translation factor GTPase superfamily. Classic translation factor GTPase family. LepA subfamily.

It is found in the cell inner membrane. It catalyses the reaction GTP + H2O = GDP + phosphate + H(+). Functionally, required for accurate and efficient protein synthesis under certain stress conditions. May act as a fidelity factor of the translation reaction, by catalyzing a one-codon backward translocation of tRNAs on improperly translocated ribosomes. Back-translocation proceeds from a post-translocation (POST) complex to a pre-translocation (PRE) complex, thus giving elongation factor G a second chance to translocate the tRNAs correctly. Binds to ribosomes in a GTP-dependent manner. In Xanthomonas oryzae pv. oryzae (strain PXO99A), this protein is Elongation factor 4.